The primary structure comprises 305 residues: Oxygen-dependent coproporphyrinogen-III oxidase (305 aa).

Position 98 (serine 98) interacts with substrate. The a divalent metal cation site is built by histidine 102 and histidine 112. Histidine 112 (proton donor) is an active-site residue. Substrate is bound at residue 114-116 (NVR). Residues histidine 151 and histidine 181 each contribute to the a divalent metal cation site. An important for dimerization region spans residues 246 to 281 (YVEFNLVYDRGTLFGLQSGGRTESILMSMPPLARWE). 264–266 (GGR) contacts substrate.

This sequence belongs to the aerobic coproporphyrinogen-III oxidase family. In terms of assembly, homodimer. The cofactor is a divalent metal cation.

It localises to the cytoplasm. The enzyme catalyses coproporphyrinogen III + O2 + 2 H(+) = protoporphyrinogen IX + 2 CO2 + 2 H2O. Its pathway is porphyrin-containing compound metabolism; protoporphyrin-IX biosynthesis; protoporphyrinogen-IX from coproporphyrinogen-III (O2 route): step 1/1. In terms of biological role, involved in the heme biosynthesis. Catalyzes the aerobic oxidative decarboxylation of propionate groups of rings A and B of coproporphyrinogen-III to yield the vinyl groups in protoporphyrinogen-IX. This is Oxygen-dependent coproporphyrinogen-III oxidase from Vibrio vulnificus (strain CMCP6).